The primary structure comprises 269 residues: GATA transcription factor 3 (269 aa).

The Nuclear localization signal signature appears at 136–143; it reads KPRTKRSR. The GATA-type zinc-finger motif lies at 176–230; sequence LVFQRRCSHCGTNNTPQWRTGPVGPKTLCNACGVRFKSGRLCPEYRPADSPTFSN. The interval 245-269 is disordered; sequence KSKELGEETGEASTKSDPVKFGSKW.

Belongs to the type IV zinc-finger family. Class A subfamily. Mostly expressed in roots. Also expressed in stems, flowers and leaves.

It localises to the nucleus. Transcriptional activator that specifically binds 5'-GATA-3' or 5'-GAT-3' motifs within gene promoters. May be involved in the regulation of some light-responsive genes. In Arabidopsis thaliana (Mouse-ear cress), this protein is GATA transcription factor 3 (GATA3).